The chain runs to 227 residues: UPF0758 protein SSA_1218 (227 aa).

An MPN domain is found at 104–226 (QIMGSQKLAR…YYSYREETDM (123 aa)). 3 residues coordinate Zn(2+): H175, H177, and D188. The JAMM motif motif lies at 175-188 (HNHPSGSVVPSRND).

Belongs to the UPF0758 family.

The polypeptide is UPF0758 protein SSA_1218 (Streptococcus sanguinis (strain SK36)).